Reading from the N-terminus, the 43-residue chain is Protein PsbN (43 aa).

The helical transmembrane segment at 3 to 23 (IATLVAIFISGLLVSFTGYAL) threads the bilayer.

This sequence belongs to the PsbN family.

It is found in the plastid. Its subcellular location is the chloroplast thylakoid membrane. May play a role in photosystem I and II biogenesis. The chain is Protein PsbN from Euonymus alatus (Burning bush).